The chain runs to 338 residues: Protein SPATA31F3 (338 aa).

The helical transmembrane segment at 7–29 (VLWDVGYPLYTYGSICIIALIIW) threads the bilayer. Phosphoserine is present on S152. The span at 290-306 (DRTKNIEKSPTVTKDHV) shows a compositional bias: basic and acidic residues. The segment at 290 to 338 (DRTKNIEKSPTVTKDHVWGATTQKTTEDPEAQPPSTEEEGLIFCDAPSA) is disordered.

This sequence belongs to the SPATA31 family.

The protein resides in the membrane. This chain is Protein SPATA31F3, found in Homo sapiens (Human).